Consider the following 788-residue polypeptide: Protocadherin beta-18 (788 aa).

The first 28 residues, 1–28 (MEPGKGRAQPTRQVLLFFVFLGGSLVYS), serve as a signal peptide directing secretion. 5 Cadherin domains span residues 29–133 (ETWS…TPTF), 134–242 (LNNH…APEF), 243–347 (EKPV…PPEI), 348–452 (AMTS…APAF), and 453–562 (TQTS…SPFV). At 29–691 (ETWSYSIAEE…AQADSLTVYL (663 aa)) the chain is on the extracellular side. N169 carries an N-linked (GlcNAc...) asparagine glycan. N-linked (GlcNAc...) asparagine glycans are attached at residues N419 and N437. A glycan (N-linked (GlcNAc...) asparagine) is linked at N568. Residues 569 to 672 (GSAPCTELVP…LVDGFSQPYL (104 aa)) enclose the Cadherin 6 domain. A helical transmembrane segment spans residues 692-712 (VVALASVSSLFLFSVFLFVAV). The Cytoplasmic segment spans residues 713 to 788 (RLCRRSRAAS…DSDMEKAPPF (76 aa)).

The protein localises to the cell membrane. Functionally, potential calcium-dependent cell-adhesion protein. The protein is Protocadherin beta-18 (PCDHB18) of Pan troglodytes (Chimpanzee).